A 729-amino-acid polypeptide reads, in one-letter code: Fatty acid oxidation complex subunit alpha (729 aa).

Residues 1–189 (MLYKGDTLYL…KIGLVDGVVK (189 aa)) are enoyl-CoA hydratase/isomerase. Residue D296 coordinates substrate. The interval 311–729 (ETPKQAAVLG…ARAVGDLKTA (419 aa)) is 3-hydroxyacyl-CoA dehydrogenase. NAD(+) contacts are provided by residues M324, D343, 400 to 402 (VVE), K407, and S429. H450 functions as the For 3-hydroxyacyl-CoA dehydrogenase activity in the catalytic mechanism. Residue N453 participates in NAD(+) binding. Substrate-binding residues include N500 and Y660.

It in the N-terminal section; belongs to the enoyl-CoA hydratase/isomerase family. The protein in the C-terminal section; belongs to the 3-hydroxyacyl-CoA dehydrogenase family. Heterotetramer of two alpha chains (FadB) and two beta chains (FadA).

It carries out the reaction a (3S)-3-hydroxyacyl-CoA + NAD(+) = a 3-oxoacyl-CoA + NADH + H(+). The catalysed reaction is a (3S)-3-hydroxyacyl-CoA = a (2E)-enoyl-CoA + H2O. It catalyses the reaction a 4-saturated-(3S)-3-hydroxyacyl-CoA = a (3E)-enoyl-CoA + H2O. The enzyme catalyses (3S)-3-hydroxybutanoyl-CoA = (3R)-3-hydroxybutanoyl-CoA. It carries out the reaction a (3Z)-enoyl-CoA = a 4-saturated (2E)-enoyl-CoA. The catalysed reaction is a (3E)-enoyl-CoA = a 4-saturated (2E)-enoyl-CoA. The protein operates within lipid metabolism; fatty acid beta-oxidation. Involved in the aerobic and anaerobic degradation of long-chain fatty acids via beta-oxidation cycle. Catalyzes the formation of 3-oxoacyl-CoA from enoyl-CoA via L-3-hydroxyacyl-CoA. It can also use D-3-hydroxyacyl-CoA and cis-3-enoyl-CoA as substrate. The protein is Fatty acid oxidation complex subunit alpha of Escherichia fergusonii (strain ATCC 35469 / DSM 13698 / CCUG 18766 / IAM 14443 / JCM 21226 / LMG 7866 / NBRC 102419 / NCTC 12128 / CDC 0568-73).